A 292-amino-acid chain; its full sequence is Early E4 34 kDa protein (292 aa).

This sequence belongs to the adenoviridae E4 30 to 34 kDa protein family. As to quaternary structure, interacts with E1B-55k.

It is found in the host nucleus. It localises to the host cytoplasm. In terms of biological role, plays a major role to prevent cellular inhibition of viral genome replication by nuclear bodies. Assembles an SCF-like E3 ubiquitin ligase complex based on the cellular proteins ELOB, ELOC, CUL5 and RBX1, in cooperation with viral E1B-55K. This viral RING-type ligase ubiquitinates cellular substrates prior to proteasomal degradation: p53/TP53, LIG4, MRE11-RAD50-NBS1 (MRN) complex, ITGA3, DAXX and BLM. In Human adenovirus D serotype 9 (HAdV-9), this protein is Early E4 34 kDa protein.